Consider the following 336-residue polypeptide: Ornithine carbamoyltransferase, catabolic (336 aa).

Carbamoyl phosphate is bound by residues 57 to 60, glutamine 84, arginine 108, and 135 to 138; these read STRT and HPTQ. Residues asparagine 168, aspartate 232, and 236–237 contribute to the L-ornithine site; that span reads SM. Residues 274-275 and arginine 321 contribute to the carbamoyl phosphate site; that span reads CL.

This sequence belongs to the aspartate/ornithine carbamoyltransferase superfamily. OTCase family.

It localises to the cytoplasm. The enzyme catalyses carbamoyl phosphate + L-ornithine = L-citrulline + phosphate + H(+). Its pathway is amino-acid degradation; L-arginine degradation via ADI pathway; carbamoyl phosphate from L-arginine: step 2/2. Functionally, reversibly catalyzes the transfer of the carbamoyl group from carbamoyl phosphate (CP) to the N(epsilon) atom of ornithine (ORN) to produce L-citrulline. This chain is Ornithine carbamoyltransferase, catabolic, found in Burkholderia pseudomallei (strain K96243).